A 37-amino-acid chain; its full sequence is Large ribosomal subunit protein bL36 (37 aa).

It belongs to the bacterial ribosomal protein bL36 family.

The protein is Large ribosomal subunit protein bL36 of Natranaerobius thermophilus (strain ATCC BAA-1301 / DSM 18059 / JW/NM-WN-LF).